We begin with the raw amino-acid sequence, 123 residues long: UPF0738 protein BALH_1059 (123 aa).

This sequence belongs to the UPF0738 family.

The protein is UPF0738 protein BALH_1059 of Bacillus thuringiensis (strain Al Hakam).